We begin with the raw amino-acid sequence, 151 residues long: Ubiquitin-conjugating enzyme E2 2 (151 aa).

The UBC core domain occupies 4 to 150; it reads AARRRLMRDF…VRETVEKSWE (147 aa). Residue C88 is the Glycyl thioester intermediate of the active site.

Belongs to the ubiquitin-conjugating enzyme family.

The protein resides in the cytoplasm. It is found in the nucleus. It carries out the reaction S-ubiquitinyl-[E1 ubiquitin-activating enzyme]-L-cysteine + [E2 ubiquitin-conjugating enzyme]-L-cysteine = [E1 ubiquitin-activating enzyme]-L-cysteine + S-ubiquitinyl-[E2 ubiquitin-conjugating enzyme]-L-cysteine.. It participates in protein modification; protein ubiquitination. Its function is as follows. Catalyzes the covalent attachment of ubiquitin to other proteins. Plays a role in transcription regulation by catalyzing the monoubiquitination of histone H2B to form H2BK123ub1. H2BK123ub1 gives a specific tag for epigenetic transcriptional activation and is also a prerequisite for H3K4me and H3K79me formation. Also involved in postreplication repair of UV-damaged DNA, in N-end rule-dependent protein degradation and in sporulation. The chain is Ubiquitin-conjugating enzyme E2 2 (mus-8) from Neurospora crassa (strain ATCC 24698 / 74-OR23-1A / CBS 708.71 / DSM 1257 / FGSC 987).